The sequence spans 113 residues: Hydrogenase maturation factor HypA (113 aa).

Residue His-2 coordinates Ni(2+). Residues Cys-73, Cys-76, Cys-89, and Cys-92 each coordinate Zn(2+).

This sequence belongs to the HypA/HybF family.

Functionally, involved in the maturation of [NiFe] hydrogenases. Required for nickel insertion into the metal center of the hydrogenase. The chain is Hydrogenase maturation factor HypA from Xanthobacter autotrophicus (strain ATCC BAA-1158 / Py2).